The primary structure comprises 54 residues: Synaptosomal-associated protein 25 (54 aa).

Belongs to the SNAP-25 family. Part of the SNARE core complex containing SNAP25, VAMP2 and STX1A; this complex binds CPLX1. Found in a complex containing SYT1, SV2B and syntaxin-1. Found in a ternary complex with STX1A and VAMP8. Interacts with HSC70 and with SYT9, forming a complex with DNAJC5. The interaction with SYT9 is inhibited in presence of calcium. Isoform 1 and isoform 2 interact with BLOC1S6. Interacts with CENPF. Interacts with EQTN. Interacts with HGS. Interacts with KCNB1 (via N-terminus); reduces the voltage-dependent potassium channel KCNB1 activity in pancreatic beta cells. Interacts with OTOF. Interacts with RIMS1. Interacts with SNAPIN. Interacts with STXBP6. Interacts with TRIM9. Interacts with ZDHHC13 (via ANK repeats). Interacts with ZDHHC17 (via ANK repeats). Associates with the BLOC-1 complex. Interacts with PLCL1 (via C2 domain). Interacts with PRRT2; this interaction may impair the formation of the SNARE complex. Interacts with alpha-synuclein/SNCA. Interacts with PRPH2. Interacts with ROM1. Interacts with STX3. The N-terminus is blocked.

The protein localises to the cytoplasm. It is found in the perinuclear region. The protein resides in the cell membrane. Its subcellular location is the synapse. It localises to the synaptosome. The protein localises to the photoreceptor inner segment. In terms of biological role, t-SNARE involved in the molecular regulation of neurotransmitter release. May play an important role in the synaptic function of specific neuronal systems. Associates with proteins involved in vesicle docking and membrane fusion. Regulates plasma membrane recycling through its interaction with CENPF. Modulates the gating characteristics of the delayed rectifier voltage-dependent potassium channel KCNB1 in pancreatic beta cells. This is Synaptosomal-associated protein 25 (SNAP25) from Oryctolagus cuniculus (Rabbit).